A 131-amino-acid polypeptide reads, in one-letter code: NADPH-dependent 7-cyano-7-deazaguanine reductase (131 aa).

C48 serves as the catalytic Thioimide intermediate. Residue D55 is the Proton donor of the active site. Substrate-binding positions include 70 to 72 (VEL) and 89 to 90 (QE).

The protein belongs to the GTP cyclohydrolase I family. QueF type 1 subfamily.

The protein resides in the cytoplasm. The enzyme catalyses 7-aminomethyl-7-carbaguanine + 2 NADP(+) = 7-cyano-7-deazaguanine + 2 NADPH + 3 H(+). The protein operates within tRNA modification; tRNA-queuosine biosynthesis. In terms of biological role, catalyzes the NADPH-dependent reduction of 7-cyano-7-deazaguanine (preQ0) to 7-aminomethyl-7-deazaguanine (preQ1). The polypeptide is NADPH-dependent 7-cyano-7-deazaguanine reductase (Caldicellulosiruptor bescii (strain ATCC BAA-1888 / DSM 6725 / KCTC 15123 / Z-1320) (Anaerocellum thermophilum)).